A 285-amino-acid chain; its full sequence is S-methyl-5'-thioadenosine phosphorylase (285 aa).

Residues Ser10, 52–53 (RH), and 85–86 (TA) each bind phosphate. Met188 lines the substrate pocket. Thr189 contributes to the phosphate binding site. 212–214 (DYD) contributes to the substrate binding site.

It belongs to the PNP/MTAP phosphorylase family. MTAP subfamily. As to quaternary structure, homotrimer.

It localises to the cytoplasm. The protein resides in the nucleus. The catalysed reaction is S-methyl-5'-thioadenosine + phosphate = 5-(methylsulfanyl)-alpha-D-ribose 1-phosphate + adenine. It participates in amino-acid biosynthesis; L-methionine biosynthesis via salvage pathway; S-methyl-5-thio-alpha-D-ribose 1-phosphate from S-methyl-5'-thioadenosine (phosphorylase route): step 1/1. In terms of biological role, catalyzes the reversible phosphorylation of S-methyl-5'-thioadenosine (MTA) to adenine and 5-methylthioribose-1-phosphate. Involved in the breakdown of MTA, a major by-product of polyamine biosynthesis. Responsible for the first step in the methionine salvage pathway after MTA has been generated from S-adenosylmethionine. Has broad substrate specificity with 6-aminopurine nucleosides as preferred substrates. The polypeptide is S-methyl-5'-thioadenosine phosphorylase (Caenorhabditis briggsae).